Reading from the N-terminus, the 342-residue chain is MKGLVKKISAPGLWMENLPIPSHVKDDEVLIKTIKTSICGTDVHIYKWDAWAQKNVPVPLVIGHEFIGEIAEFGKNVKGFKIGERVCGEGHIVCNQCPNCRMGRKHVCMHTKGLGYHISGCFAEYFVLPAENVFSLPPSISDDLGAIFDPYGNAVHTTLAFNLIGEDVLITGAGPIGIMAAAIAKQAGARHIVITDVNDYRLDLARTMGVSHAINVNRESLDNFMQSLGIKYGFTVGLEMSGHPDGLKTLTEKIRHGGNIALLGILPPATSIDWNLVIFKMLTLKGIYGREIFSTWYQMVHLLEIGLNLAPIITHHFSVDNFEKGFEVMLSGQSGKVILDWV.

Residue Cys-39 participates in Zn(2+) binding. Active-site charge relay system residues include Thr-41 and His-44. 6 residues coordinate Zn(2+): His-64, Glu-65, Cys-94, Cys-97, Cys-100, and Cys-108. Residues Ile-176, Asp-196, Arg-201, 263-265, and 287-288 each bind NAD(+); these read LGI and IY.

It belongs to the zinc-containing alcohol dehydrogenase family. Homotetramer. It depends on Zn(2+) as a cofactor.

Its subcellular location is the cytoplasm. The catalysed reaction is L-threonine + NAD(+) = (2S)-2-amino-3-oxobutanoate + NADH + H(+). It participates in amino-acid degradation; L-threonine degradation via oxydo-reductase pathway; glycine from L-threonine: step 1/2. Functionally, catalyzes the NAD(+)-dependent oxidation of L-threonine to 2-amino-3-ketobutyrate. This is L-threonine 3-dehydrogenase from Protochlamydia amoebophila (strain UWE25).